A 377-amino-acid chain; its full sequence is Erythronate-4-phosphate dehydrogenase (377 aa).

Residues serine 59 and threonine 81 each coordinate substrate. An NAD(+)-binding site is contributed by aspartate 162. The active site involves arginine 237. Aspartate 260 is an NAD(+) binding site. Residue glutamate 265 is part of the active site. Histidine 282 (proton donor) is an active-site residue. Glycine 285 is a binding site for NAD(+). Substrate is bound at residue tyrosine 286.

This sequence belongs to the D-isomer specific 2-hydroxyacid dehydrogenase family. PdxB subfamily. Homodimer.

Its subcellular location is the cytoplasm. It catalyses the reaction 4-phospho-D-erythronate + NAD(+) = (R)-3-hydroxy-2-oxo-4-phosphooxybutanoate + NADH + H(+). It participates in cofactor biosynthesis; pyridoxine 5'-phosphate biosynthesis; pyridoxine 5'-phosphate from D-erythrose 4-phosphate: step 2/5. Catalyzes the oxidation of erythronate-4-phosphate to 3-hydroxy-2-oxo-4-phosphonooxybutanoate. In Psychrobacter arcticus (strain DSM 17307 / VKM B-2377 / 273-4), this protein is Erythronate-4-phosphate dehydrogenase.